The chain runs to 103 residues: Large ribosomal subunit protein bL21 (103 aa).

The protein belongs to the bacterial ribosomal protein bL21 family. As to quaternary structure, part of the 50S ribosomal subunit. Contacts protein L20.

Its function is as follows. This protein binds to 23S rRNA in the presence of protein L20. The chain is Large ribosomal subunit protein bL21 from Lactobacillus helveticus (strain DPC 4571).